The chain runs to 503 residues: MMMTKQKNSLAERLNIGEEARELKLGATFNPKNTSTAFHTIKYDFKPASVDTSRMASVDVGSNNQVTVTVPNSESSGVPHTVYKGNQREYAKECLMIYDKETGAITIEKLNHNIQVKKTRNEVSNKSVQLPGQNMGQGQPHNQGANGAGPAPTSVPGQGSGTAPKMENSTMRISTKTKVSTGSRRNNIIDFKPRNSPMQQNSPSRPVPVHRSPQSAPAWDANNAQQTLPSIPLITDDDDFGLRAALHNSGHANRSGSAAGQPDFVSTSSSTHIGKQRQAPPHGHGKRQQMHQRLSPPMAQQQQQHPSNYGRGYNGGHNHAQQQQQQQRNSPPRQRPSAYGHDNTMDVDSSREHELTSQSVAQAAAALEQQIGGVLSASSSSSESDSSDSDSGSDSDDSTEDDRSTQGQQQDHQQQPHQVYQNHNHTQQQVTQQHHNQLPNLGLGSISPAYGSNHQQQHQQQMLQHQQKQKQQSGIYASNGGFPNDFLQNDLQLSSNSSDDDDD.

Polar residues-rich tracts occupy residues 119-145 and 167-186; these read TRNE…NQGA and ENST…SRRN. 3 disordered regions span residues 119-220, 250-360, and 372-503; these read TRNE…PAWD, GHAN…SQSV, and GGVL…DDDD. Ser-196 is modified (phosphoserine). The span at 202–215 shows a compositional bias: low complexity; the sequence is SPSRPVPVHRSPQS. Polar residues-rich tracts occupy residues 250–273 and 298–307; these read GHAN…STHI and MAQQQQQHPS. Low complexity predominate over residues 308–337; it reads NYGRGYNGGHNHAQQQQQQQRNSPPRQRPS. The segment covering 385-400 has biased composition (acidic residues); that stretch reads DSSDSDSGSDSDDSTE. Composition is skewed to low complexity over residues 406–437, 454–472, and 487–497; these read QGQQ…HHNQ, HQQQ…QKQQ, and LQNDLQLSSNS.

The protein belongs to the EAF family.

It is found in the nucleus. In terms of biological role, promotes transcriptional elongation by Su(Tpl)/ELL. Essential for development. The sequence is that of Ell-associated factor Eaf from Drosophila sechellia (Fruit fly).